Consider the following 457-residue polypeptide: Metal tolerance protein C4 (457 aa).

The Cytoplasmic segment spans residues 1 to 115 (MQSSHRILSR…IEINDQHSQR (115 aa)). Residues 116–136 (AVTTALWCNFLVFSLKFGVWW) form a helical membrane-spanning segment. Residues 137-141 (TSSSH) lie on the Vacuolar side of the membrane. The chain crosses the membrane as a helical span at residues 142–162 (VIMAEVVHSVADFANQALLAY). Over 163–183 (GLSSSRRAPDALHPYGYSKER) the chain is Cytoplasmic. Residues 184–204 (FVWSLISAVGIFCLGSGATIV) form a helical membrane-spanning segment. Residues 205–220 (NGVQNLWTSSPPPNME) are Vacuolar-facing. The chain crosses the membrane as a helical span at residues 221 to 241 (LAAVVIGGSFLIEGASLLVAI). Residues 242 to 267 (QSVKKGAAQEGMTIRDYIWRGHDPTS) lie on the Cytoplasmic side of the membrane. A helical transmembrane segment spans residues 268–288 (VAVMTEDGAAVAGLAIAAASL). Residues 289-297 (VAVRMTGNP) lie on the Vacuolar side of the membrane. Residues 298 to 318 (IYDPIGSIVVGNLLGMVAIFL) traverse the membrane as a helical segment. The Cytoplasmic segment spans residues 319–457 (IQRNRHALIG…HNPTPTDPSL (139 aa)).

The protein belongs to the cation diffusion facilitator (CDF) transporter (TC 2.A.4) family.

The protein resides in the vacuole membrane. Its function is as follows. Involved in sequestration of excess metal in the cytoplasm into vacuoles to maintain metal homeostasis. The chain is Metal tolerance protein C4 (MTPC4) from Arabidopsis thaliana (Mouse-ear cress).